Reading from the N-terminus, the 117-residue chain is Large ribosomal subunit protein uL24 (117 aa).

It belongs to the universal ribosomal protein uL24 family. As to quaternary structure, part of the 50S ribosomal subunit.

In terms of biological role, one of two assembly initiator proteins, it binds directly to the 5'-end of the 23S rRNA, where it nucleates assembly of the 50S subunit. One of the proteins that surrounds the polypeptide exit tunnel on the outside of the subunit. The polypeptide is Large ribosomal subunit protein uL24 (Trichormus variabilis (strain ATCC 29413 / PCC 7937) (Anabaena variabilis)).